The following is a 205-amino-acid chain: Small ribosomal subunit protein uS4 (205 aa).

Residues 1-16 (MSKRESSKYKIDRRMG) are compositionally biased toward basic and acidic residues. Residues 1-46 (MSKRESSKYKIDRRMGENIWGRPKSPVNRREYGPGQHGQRRKGKLS) form a disordered region. The S4 RNA-binding domain occupies 94-157 (SRLDAIVYRA…KQLVTVLEAV (64 aa)).

It belongs to the universal ribosomal protein uS4 family. Part of the 30S ribosomal subunit. Contacts protein S5. The interaction surface between S4 and S5 is involved in control of translational fidelity.

Functionally, one of the primary rRNA binding proteins, it binds directly to 16S rRNA where it nucleates assembly of the body of the 30S subunit. With S5 and S12 plays an important role in translational accuracy. The chain is Small ribosomal subunit protein uS4 from Rhizobium etli (strain CIAT 652).